We begin with the raw amino-acid sequence, 538 residues long: MAAQLHHALYELLHEAAAAQRALLLAIPFSLLLLPLLLRYLAASASASATKNDGAAPASDPDKLLSLLPSPPMKLPIIGHLHLMGDIPYVSLAALATRYGPDLMLLRLGAVPTVVVSSPRVAEAVLRTYDHVFSSRPRSLVSDIIMYGATDSCFAPYGDHFRKARKLVTVHLLNASKVRSQRPAREEEVRGALDRVRRAAAAREPVDMSELLHSFVNNLVCRAVSGKFSMEEGRNRLFRELTDINAGLLGGFHIQDYFPRLGRIELVRKVACAKTRRVRKRWDDLLDKLIDDHAARMATHQDEDDDKDFIYVLLSLQKEYGLTRDHIKAILIDMFEAGTDTSYMTLEFAMTELIRKPHLMKKLQEEVRRNVPAGQEMVTEDNLPGMTDLKAVIKETLRLHPPVPLLLPHYSLDACEVAGYTIPANTRVVVNAWALGRHSGYWERENEFVPERFLSGDVAGGVDLKPNEFQFLAFGSGRRMCPGVHSASATIEAMLSNLMYRFDWQLPAGMKAEDVDMTEVFGITVSRKEKLLLVPQAA.

Residues 22 to 42 (ALLLAIPFSLLLLPLLLRYLA) form a helical membrane-spanning segment. Heme is bound at residue C481.

This sequence belongs to the cytochrome P450 family. The cofactor is heme.

It is found in the membrane. The enzyme catalyses indole + reduced [NADPH--hemoprotein reductase] + O2 = indolin-2-one + oxidized [NADPH--hemoprotein reductase] + H2O + H(+). The protein operates within secondary metabolite biosynthesis; 2,4-dihydroxy-1,4-benzoxazin-3-one biosynthesis; 2,4-dihydroxy-1,4-benzoxazin-3-one from indoleglycerol phosphate: step 2/5. Its function is as follows. Catalyzes the conversion of indole to indolin-2-one. This is indole-2-monooxygenase (CYP71C4) from Zea mays (Maize).